Reading from the N-terminus, the 1434-residue chain is MDDLMDFFDSSKNFKRGTLPRGCISGDPNAYTSESSDSKPIKREIIGTKDVNEIVQKEQQLMNQLVGGPSNTKRTKTLDELESDDDDKMELNEAPTVRSDEAFYEKYHFDLNRNRSLPIYAQREQIMKAIKENPVVILKGETGCGKTTQVPQYILDEAFKKREFCNIVVTQPRRIAAISIANRVCQERRWQPGTVCSYQVGLHKQSNSADTRLLYCTTGVLLNNLIRLKTLTHYTHIVLDEVHDRDQDMDFLLIVVRRLLALNSRHVKVILMSATIDTREFCKYFASCKSMPPVVAASHGRKYPLVKYYRDQLKNINWKTEPQQREPGITHEGYRDAVKILLVIDNMERKAEGQSEQSYEEAKRTGSVLIFLPGVNEIDTMAEHIEHVMNESPNIKITIVRCHSLMSSDSQEDVFQPPLSGHRKVILTTNIAESSITVTDVSYVIDFCLAKVMHIDTASNFSCLCLEWASKVNCRQRAGRVGRTRSGRVYRMVTKAFYMEEMQEFGIPEMLRSPLQSSVLKAKELDMGGPSEILALAMSPPNLTDIHNTVLLLKEVGALYTTVDGVYEQLDGDLTYWGTIMSRFPLDVRLSRLIILGYIFNCLDEAIIIAAGMSVRSLYLSGQRQRTSDAFWMHYIFADGSGSDLVGFWRVYKIYVNMCQNLPMKDSEVQWARRYNVSLRSLKEMYLLVQELQKRCAALNLVSLPVGASHMWHDREKSIILKVIIAGAFYPNYFTRNNKTIPDYDRDVYHSICGNDPCRTVYFTQFVPRYMGELYTRRVKELFLEARIPPEKIDVTFQQGSEKIFVTFKGDDDDYMNSTDVVQVPGRVTTEVYKAIRMRMNNPNRSLRVMDQNSALKYVQQRNIGVVQDSKWVPPSKQWNVELLTLPSVFDKKITGLITYIVNCGKFYFQPRSLAERIASMTEIFNAPEQLSYHVRNASAITKGLQLLARRGSKFQRAVVLKVEPQSNAIPQFLVRFIDYGDWALLAMDQLRLMRHELRRDLEELPPRMFECRLALVQPSSVTSYSNRWPQKANEMLSKLASCGPLELEVYSLVNNVAAVLIHMRDGVLNDKLVEHQLARRADEDYMSRKDHDFRIRKQKMKRYVPAAEQQQVNEEYLRFNQLPQDADLEPPPLDKCHTSIRLKGPYSPLENSMNSMLRIGMYKSVAIEKESVNAVLLDADPQDRHDQMIVAASVTESDGNDKLVARGTTLMPNIHGFGALMAMLFCPTMQIKCNPERTKYVCLLAGLGFNPDTLEPYFQEHDMVINLDVGILKDDIRIINQMRYNIDSMFFNFDANELPAVGVEGRLVIFNQLRNLLTRLLGKDRSFIERHVWNSKYVWEDMSDLEPPSEPYGKRAIFPMHGSYDLESEDMGNLLALQENCSELYDWQNFDGVMQPRNCRLCNETLESVTQLRLHLLTQLHRDREKQVGWKQQ.

The interval 66–86 (VGGPSNTKRTKTLDELESDDD) is disordered. The Helicase ATP-binding domain maps to 127–294 (MKAIKENPVV…FASCKSMPPV (168 aa)). 140–147 (GETGCGKT) is an ATP binding site. A DEAH box motif is present at residues 240-243 (DEVH). Residues 354–526 (QSEQSYEEAK…SSVLKAKELD (173 aa)) form the Helicase C-terminal domain. Positions 938–1001 (ASAITKGLQL…RLMRHELRRD (64 aa)) constitute a Tudor domain.

Belongs to the DEAD box helicase family. DEAH subfamily.

It localises to the cytoplasm. It carries out the reaction ATP + H2O = ADP + phosphate + H(+). In terms of biological role, probable ATP-binding RNA helicase which plays a central role during spermatogenesis and oogenesis by repressing transposable elements and preventing their mobilization, which is essential for the germline integrity. Acts via the piRNA metabolic process, which mediates the repression of transposable elements during meiosis by forming complexes composed of piRNAs and Piwi and govern the methylation and subsequent repression of transposons. Involved in the repression of LTR retrotransposon copia. Also involved in telomere regulation by repressing specialized telomeric retroelements HeT-A, TAHRE, and TART; Drosophila telomeres being maintained by transposition of specialized telomeric retroelements. Involved in telomeric trans-silencing, a repression mechanism by which a transposon or a transgene inserted in subtelomeric heterochromatin has the capacity to repress in trans in the female germline, a homologous transposon, or transgene located in euchromatin. Involved in the repression of testis-expressed Stellate genes by the homologous Su(Ste) repeats. Required for anteroposterior and dorsoventral axis formation during oogenesis. The polypeptide is Probable ATP-dependent RNA helicase spindle-E (spn-E) (Drosophila grimshawi (Hawaiian fruit fly)).